Consider the following 2467-residue polypeptide: Transcription factor TFIIIB component B'' homolog (2467 aa).

Disordered stretches follow at residues 1-145 and 159-243; these read MFRR…RYRI and LRKE…VDDG. The interval 1–301 is interaction with ZBTB43; it reads MFRRARLSVK…TYSSFRKNYY (301 aa). Over residues 81–92 the composition is skewed to low complexity; the sequence is AAESSTLSSASS. Positions 99-118 are enriched in polar residues; the sequence is SSTSSLVQPSGSAPSQSRPL. 2 stretches are compositionally biased toward basic and acidic residues: residues 133-144 and 177-186; these read AKEKQPCSDRYR and RPPDRSKMTM. Residues 144 to 177 adopt a coiled-coil conformation; that stretch reads RIYKARKLREMLKEELRKEKKQWKNKFSTNESQR. Residues 231 to 242 show a composition bias toward acidic residues; that stretch reads NDNEDVEEEVDD. One can recognise a Myb-like domain in the interval 297–347; the sequence is RKNYYSKPWSNKETDMFFLAISMVGTDFSMIGQLFPHRARIEIKNKFKREE. The tract at residues 357–472 is required for phosphorylation by CSNK2A1; that stretch reads AFQEKRPFDF…QEKKRRRNQG (116 aa). 16 disordered regions span residues 380-513, 576-720, 748-844, 866-893, 971-1200, 1231-1270, 1318-1388, 1409-1448, 1527-1561, 1592-1706, 1902-1926, 1977-2014, 2058-2083, 2179-2206, 2260-2290, and 2304-2449; these read EEKR…ECNK, SADM…VKAA, PPQT…PATW, LTAT…NAEM, LQEN…SSKI, LGRH…VKPA, DSDQ…LVPI, LPVR…PELQ, KAKP…EDHL, IHSE…RASK, IVSK…LPTR, IQRE…QCVG, LDSG…SDVP, LVVQ…DLTS, GIFP…SGSL, and LPQS…EEVT. Residues 458–487 are a coiled coil; it reads EQDQNQEKKRRRNQGEANKQEATNLLERVL. Residues 649 to 660 show a composition bias toward basic and acidic residues; that stretch reads AAEKNHMEKETM. A compositionally biased stretch (basic residues) spans 809-824; the sequence is RFQKPKPNTGRRRRRI. Composition is skewed to basic and acidic residues over residues 873–884, 992–1002, 1009–1041, 1089–1098, 1112–1130, and 1150–1170; these read KDSESDVKDSGR, TGKDLAMKEST, TEER…RGEM, EGKELNLRET, EKTD…ERES, and DLGK…EEHS. Polar residues-rich tracts occupy residues 1180-1200, 1251-1265, 1318-1330, and 1364-1382; these read LSSS…SSKI, DTNL…QQPL, DSDQ…QHNV, and PPNS…NQEN. 3 stretches are compositionally biased toward basic and acidic residues: residues 1429 to 1448, 1536 to 1561, and 1592 to 1603; these read QIVE…PELQ, RRKD…EDHL, and IHSEESGSDRND. Polar residues-rich tracts occupy residues 1621–1642 and 1650–1665; these read EQPT…SSCP and YPKT…SSAS. Over residues 1688 to 1697 the composition is skewed to basic residues; sequence RGSKRIRGKT. Basic and acidic residues-rich tracts occupy residues 1902–1913, 1977–1996, and 2068–2078; these read IVSKEQSNRDAA, IQRE…DKSH, and AAKEALKETPK. Residues 2185-2199 show a composition bias toward low complexity; sequence PSLSPSRSGSSEKPP. 3 stretches are compositionally biased toward polar residues: residues 2262 to 2273, 2319 to 2334, and 2414 to 2429; these read FPTSESTHATSK, PASN…SSSK, and TAGS…SSDQ.

Component of TFIIIB complex. The TFIIIB complex has two activities, alpha and beta. The TFIIIB-alpha and TFIIIB-beta activities are required for transcription of genes with TFIIIC-bound internal promoters and PSE transcription factor-bound external promoters, respectively. The TFIIIB-alpha activity complex is composed of TBP, BDP1, and a complex containing both BRF2 and at least four stably associated proteins; YY1 facilitates the formation of TFIIIB-alpha activity complex. The TFIIIB-beta activity complex is composed of TBP, BDP1, and BRF1. Interacts with BRF1; this interaction diminishes during mitosis resulting in the release of BDP1 from chromosomal templates. Component of TFIIIC complex. The TFIIIC complex has two activities, C1 and C2. The TFIIIC2 activity complex is only required for transcription of the 'classical' pol III genes whereas the TFIIIC1 activity complex is required for transcription of all pol III genes. The TFIIIC1 activity complex is composed at least of BDP1. Interacts with ZBTB43. In terms of processing, phosphorylated by CSNK2A1 during mitosis, resulting in its release from chromatin and suppression of polymerase III transcription. Expressed in the cochlea, particularly in the spiral ligament, the capillaries of the stria vascularis and the basilar membrane.

The protein localises to the nucleus. General activator of RNA polymerase III transcription. Requires for transcription from all three types of polymerase III promoters. Requires for transcription of genes with internal promoter elements and with promoter elements upstream of the initiation site. The sequence is that of Transcription factor TFIIIB component B'' homolog (Bdp1) from Mus musculus (Mouse).